The following is a 2671-amino-acid chain: Stalled ribosome sensor GCN1 (2671 aa).

Ala2 is modified (N-acetylalanine). HEAT repeat units lie at residues Asn140–Gly178, Glu257–Ser293, Gln294–Asp331, Cys385–Lys423, Leu425–Leu459, Leu460–Ser500, Ser560–Gly597, Lys599–Thr636, Ala700–Val732, and Leu733–Glu772. A Phosphoserine modification is found at Ser729. Ser786 carries the post-translational modification Phosphoserine. The stretch at Gln804–Ile865 forms a coiled coil. HEAT repeat units follow at residues Val879 to Thr918, Ser979 to Leu1016, Leu1035 to Gly1072, Phe1078 to Ser1115, Asp1155 to Arg1192, Tyr1210 to Ser1250, Ser1251 to Lys1289, Glu1290 to Lys1332, Pro1335 to Glu1372, Ala1374 to Ile1410, Leu1413 to Lys1451, Pro1455 to Ala1492, His1493 to Lys1530, Ser1534 to Asn1571, Glu1573 to Asp1609, Pro1611 to Gln1648, Pro1653 to Glu1690, Cys1692 to Val1729, Lys1731 to Asp1769, Pro1773 to Glu1810, Ala1812 to Gly1848, Glu1921 to Glu1958, Lys1959 to Arg1996, Phe2001 to His2038, Gln2039 to Arg2074, Val2076 to His2108, Val2111 to Asp2146, Thr2147 to Ala2184, Ser2188 to Ala2225, Arg2259 to Ala2296, Pro2301 to Gly2338, Ile2339 to Lys2380, Asp2382 to Ser2417, Ala2422 to Asp2459, Gln2546 to Pro2583, Gln2588 to Gly2625, and Glu2627 to Ser2661. The RWDBD region stretch occupies residues Gly2260–Leu2408. Ser2276 carries the post-translational modification Phosphoserine.

The protein belongs to the GCN1 family. Interacts with EIF2AK4/GCN2; this interaction stimulates the EIF2AK4/GCN2 kinase activity and is impaired by IMPACT upon a variety of stress conditions, such as amino acid depletion, UV-C irradiation, proteasome inhibitor treatment and glucose deprivation. Interacts with IMPACT; this prevents the interaction of GCN1 with EIF2AK4/GCN2 and inhibits EIF2AK4/GCN2 kinase activity. Interacts with RNF14; interaction takes place following ribosome stalling and promotes recruitment of RNF14. In terms of tissue distribution, expressed in the hypothalamus, cortex and hippocampus.

The protein localises to the cytoplasm. Functionally, ribosome collision sensor that plays a key role in the RNF14-RNF25 translation quality control pathway, a pathway that takes place when a ribosome has stalled during translation, and which promotes ubiquitination and degradation of translation factors on stalled ribosomes. Directly binds to the ribosome and acts as a sentinel for colliding ribosomes: activated following ribosome stalling and promotes recruitment of RNF14, which directly ubiquitinates EEF1A1/eEF1A, leading to its degradation. In addition to EEF1A1/eEF1A, the RNF14-RNF25 translation quality control pathway mediates degradation of ETF1/eRF1 and ubiquitination of ribosomal protein. GCN1 also acts as a positive activator of the integrated stress response (ISR) by mediating activation of EIF2AK4/GCN2 in response to amino acid starvation. Interaction with EIF2AK4/GCN2 on translating ribosomes stimulates EIF2AK4/GCN2 kinase activity, leading to phosphorylation of eukaryotic translation initiation factor 2 (eIF-2-alpha/EIF2S1). EIF2S1/eIF-2-alpha phosphorylation converts EIF2S1/eIF-2-alpha into a global protein synthesis inhibitor, leading to a global attenuation of cap-dependent translation, and thus to a reduced overall utilization of amino acids, while concomitantly initiating the preferential translation of ISR-specific mRNAs, such as the transcriptional activator ATF4, and hence allowing ATF4-mediated reprogramming of amino acid biosynthetic gene expression to alleviate nutrient depletion. This Mus musculus (Mouse) protein is Stalled ribosome sensor GCN1.